The chain runs to 64 residues: DNA gyrase inhibitor YacG (64 aa).

Zn(2+) contacts are provided by Cys-7, Cys-10, Cys-26, and Cys-30. The tract at residues 44–64 is disordered; sequence RIPGEIDPELLPYPEEGEQWQ.

It belongs to the DNA gyrase inhibitor YacG family. As to quaternary structure, interacts with GyrB. Zn(2+) is required as a cofactor.

Functionally, inhibits all the catalytic activities of DNA gyrase by preventing its interaction with DNA. Acts by binding directly to the C-terminal domain of GyrB, which probably disrupts DNA binding by the gyrase. The chain is DNA gyrase inhibitor YacG from Aeromonas hydrophila subsp. hydrophila (strain ATCC 7966 / DSM 30187 / BCRC 13018 / CCUG 14551 / JCM 1027 / KCTC 2358 / NCIMB 9240 / NCTC 8049).